The chain runs to 323 residues: Aspartate carbamoyltransferase catalytic subunit (323 aa).

Arg-71 and Thr-72 together coordinate carbamoyl phosphate. Lys-99 serves as a coordination point for L-aspartate. Arg-121, His-151, and Gln-154 together coordinate carbamoyl phosphate. L-aspartate is bound by residues Arg-184 and Arg-239. Gly-280 and Pro-281 together coordinate carbamoyl phosphate.

The protein belongs to the aspartate/ornithine carbamoyltransferase superfamily. ATCase family. As to quaternary structure, heterododecamer (2C3:3R2) of six catalytic PyrB chains organized as two trimers (C3), and six regulatory PyrI chains organized as three dimers (R2).

The enzyme catalyses carbamoyl phosphate + L-aspartate = N-carbamoyl-L-aspartate + phosphate + H(+). The protein operates within pyrimidine metabolism; UMP biosynthesis via de novo pathway; (S)-dihydroorotate from bicarbonate: step 2/3. Functionally, catalyzes the condensation of carbamoyl phosphate and aspartate to form carbamoyl aspartate and inorganic phosphate, the committed step in the de novo pyrimidine nucleotide biosynthesis pathway. In Cupriavidus pinatubonensis (strain JMP 134 / LMG 1197) (Cupriavidus necator (strain JMP 134)), this protein is Aspartate carbamoyltransferase catalytic subunit.